The following is a 677-amino-acid chain: Methionine--tRNA ligase (677 aa).

A 'HIGH' region motif is present at residues 15-25; the sequence is PYANGSIHLGH. C146, C149, C159, and C162 together coordinate Zn(2+). Positions 333 to 337 match the 'KMSKS' region motif; that stretch reads KMSKS. K336 lines the ATP pocket. The tRNA-binding domain maps to 575–677; the sequence is DFAKVDLRVA…DGAKPGQQVK (103 aa).

This sequence belongs to the class-I aminoacyl-tRNA synthetase family. MetG type 1 subfamily. Homodimer. Zn(2+) is required as a cofactor.

The protein resides in the cytoplasm. It carries out the reaction tRNA(Met) + L-methionine + ATP = L-methionyl-tRNA(Met) + AMP + diphosphate. Functionally, is required not only for elongation of protein synthesis but also for the initiation of all mRNA translation through initiator tRNA(fMet) aminoacylation. The sequence is that of Methionine--tRNA ligase from Citrobacter koseri (strain ATCC BAA-895 / CDC 4225-83 / SGSC4696).